The chain runs to 148 residues: Glyoxalase domain-containing protein 5 (148 aa).

A VOC domain is found at 25–145; that stretch reads RLDHIVMTVK…DRNLLEVSSY (121 aa).

Belongs to the glyoxalase I family.

In Mus musculus (Mouse), this protein is Glyoxalase domain-containing protein 5 (Glod5).